A 714-amino-acid chain; its full sequence is Polyribonucleotide nucleotidyltransferase (714 aa).

Mg(2+) is bound by residues Asp-487 and Asp-493. The KH domain occupies 554–613 (PRIEVMTIPVDKIREVIGSGGKVIREIVEKTGAKINIEDDGTIKIASASGKEIEAARKWI). Residues 623 to 691 (GVVYEGTVVK…ERGKVRLSMK (69 aa)) form the S1 motif domain.

Belongs to the polyribonucleotide nucleotidyltransferase family. It depends on Mg(2+) as a cofactor.

Its subcellular location is the cytoplasm. It carries out the reaction RNA(n+1) + phosphate = RNA(n) + a ribonucleoside 5'-diphosphate. Involved in mRNA degradation. Catalyzes the phosphorolysis of single-stranded polyribonucleotides processively in the 3'- to 5'-direction. The protein is Polyribonucleotide nucleotidyltransferase of Allorhizobium ampelinum (strain ATCC BAA-846 / DSM 112012 / S4) (Agrobacterium vitis (strain S4)).